The following is a 438-amino-acid chain: GTPase Obg (438 aa).

Positions 2–160 constitute an Obg domain; the sequence is SMFLDTAKIS…RELELELKIL (159 aa). A disordered region spans residues 128–147; it reads NIRFATPRNPAPEIAENGEP. The region spanning 161-338 is the OBG-type G domain; that stretch reads ADVGLVGFPS…LLDATANLLA (178 aa). GTP contacts are provided by residues 167–174, 192–196, 214–217, 284–287, and 319–321; these read GFPSVGKS, FTTIV, DLPG, NKMD, and STL. Mg(2+)-binding residues include serine 174 and threonine 194. Residues 360–438 form the OCT domain; it reads GFSEEEKAFE…IGNFEFEFVD (79 aa).

Belongs to the TRAFAC class OBG-HflX-like GTPase superfamily. OBG GTPase family. As to quaternary structure, monomer. It depends on Mg(2+) as a cofactor.

It localises to the cytoplasm. In terms of biological role, an essential GTPase which binds GTP, GDP and possibly (p)ppGpp with moderate affinity, with high nucleotide exchange rates and a fairly low GTP hydrolysis rate. Plays a role in control of the cell cycle, stress response, ribosome biogenesis and in those bacteria that undergo differentiation, in morphogenesis control. In Streptococcus uberis (strain ATCC BAA-854 / 0140J), this protein is GTPase Obg.